The sequence spans 351 residues: Translation initiation factor eIF2B subunit beta (351 aa).

The protein belongs to the eIF-2B alpha/beta/delta subunits family. In terms of assembly, component of the translation initiation factor 2B (eIF2B) complex which is a heterodecamer of two sets of five different subunits: alpha, beta, gamma, delta and epsilon. Subunits alpha, beta and delta comprise a regulatory subcomplex and subunits epsilon and gamma comprise a catalytic subcomplex. Within the complex, the hexameric regulatory complex resides at the center, with the two heterodimeric catalytic subcomplexes bound on opposite sides.

It localises to the cytoplasm. Its subcellular location is the cytosol. Its activity is regulated as follows. Activated by the chemical integrated stress response (ISR) inhibitor ISRIB which stimulates guanine nucleotide exchange factor activity for both phosphorylated and unphosphorylated eIF2. Functionally, acts as a component of the translation initiation factor 2B (eIF2B) complex, which catalyzes the exchange of GDP for GTP on eukaryotic initiation factor 2 (eIF2) gamma subunit. Its guanine nucleotide exchange factor activity is repressed when bound to eIF2 complex phosphorylated on the alpha subunit, thereby limiting the amount of methionyl-initiator methionine tRNA available to the ribosome and consequently global translation is repressed. The sequence is that of Translation initiation factor eIF2B subunit beta (Eif2b2) from Rattus norvegicus (Rat).